A 208-amino-acid polypeptide reads, in one-letter code: Uridine kinase (208 aa).

An ATP-binding site is contributed by 11–18; it reads GGTGSGKS.

The protein belongs to the uridine kinase family.

Its subcellular location is the cytoplasm. It catalyses the reaction uridine + ATP = UMP + ADP + H(+). The enzyme catalyses cytidine + ATP = CMP + ADP + H(+). The protein operates within pyrimidine metabolism; CTP biosynthesis via salvage pathway; CTP from cytidine: step 1/3. It participates in pyrimidine metabolism; UMP biosynthesis via salvage pathway; UMP from uridine: step 1/1. This is Uridine kinase from Clostridium novyi (strain NT).